The sequence spans 62 residues: Conotoxin Pl168 (62 aa).

An N-terminal signal peptide occupies residues 1–21; sequence MGMRMMFTVFLLVVLATTVVS. Positions 22-40 are excised as a propeptide; that stretch reads FTLDRASDGANAAADLVAR. Disulfide bonds link Cys-46-Cys-52 and Cys-47-Cys-61.

The protein belongs to the conotoxin A superfamily. Post-translationally, both Pro-53 and Pro-62 are not in cis/trans isomerization. Expressed by the venom duct.

Its subcellular location is the secreted. Its function is as follows. Probable neurotoxin with unknown target. Possibly targets ion channels. The protein is Conotoxin Pl168 of Conus planorbis (Planorbis cone).